Reading from the N-terminus, the 949-residue chain is Glycine dehydrogenase (decarboxylating) (949 aa).

The residue at position 704 (Lys704) is an N6-(pyridoxal phosphate)lysine.

The protein belongs to the GcvP family. As to quaternary structure, the glycine cleavage system is composed of four proteins: P, T, L and H. It depends on pyridoxal 5'-phosphate as a cofactor.

The catalysed reaction is N(6)-[(R)-lipoyl]-L-lysyl-[glycine-cleavage complex H protein] + glycine + H(+) = N(6)-[(R)-S(8)-aminomethyldihydrolipoyl]-L-lysyl-[glycine-cleavage complex H protein] + CO2. Functionally, the glycine cleavage system catalyzes the degradation of glycine. The P protein binds the alpha-amino group of glycine through its pyridoxal phosphate cofactor; CO(2) is released and the remaining methylamine moiety is then transferred to the lipoamide cofactor of the H protein. The protein is Glycine dehydrogenase (decarboxylating) of Bacteroides thetaiotaomicron (strain ATCC 29148 / DSM 2079 / JCM 5827 / CCUG 10774 / NCTC 10582 / VPI-5482 / E50).